Consider the following 122-residue polypeptide: Large ribosomal subunit protein uL14 (122 aa).

The protein belongs to the universal ribosomal protein uL14 family. Part of the 50S ribosomal subunit. Forms a cluster with proteins L3 and L19. In the 70S ribosome, L14 and L19 interact and together make contacts with the 16S rRNA in bridges B5 and B8.

Its function is as follows. Binds to 23S rRNA. Forms part of two intersubunit bridges in the 70S ribosome. In Herminiimonas arsenicoxydans, this protein is Large ribosomal subunit protein uL14.